A 159-amino-acid polypeptide reads, in one-letter code: NADH-quinone oxidoreductase subunit B (159 aa).

Cys-32, Cys-33, Cys-97, and Cys-126 together coordinate [4Fe-4S] cluster.

It belongs to the complex I 20 kDa subunit family. NDH-1 is composed of 14 different subunits. Subunits NuoB, C, D, E, F, and G constitute the peripheral sector of the complex. [4Fe-4S] cluster is required as a cofactor.

The protein resides in the cell inner membrane. It carries out the reaction a quinone + NADH + 5 H(+)(in) = a quinol + NAD(+) + 4 H(+)(out). In terms of biological role, NDH-1 shuttles electrons from NADH, via FMN and iron-sulfur (Fe-S) centers, to quinones in the respiratory chain. The immediate electron acceptor for the enzyme in this species is believed to be ubiquinone. Couples the redox reaction to proton translocation (for every two electrons transferred, four hydrogen ions are translocated across the cytoplasmic membrane), and thus conserves the redox energy in a proton gradient. In Helicobacter pylori (strain J99 / ATCC 700824) (Campylobacter pylori J99), this protein is NADH-quinone oxidoreductase subunit B.